The following is a 157-amino-acid chain: NudC domain-containing protein 2 (157 aa).

Serine 2 carries the N-acetylserine modification. Residues 14-104 (CGTPWGQWYQ…DAANCWTSLL (91 aa)) enclose the CS domain. The interval 134-157 (FDFSGAEISGNYTKGGPDFSNLEK) is disordered. At serine 142 the chain carries Phosphoserine. Tyrosine 145 is subject to Phosphotyrosine.

As to quaternary structure, interacts with LIS1.

The protein resides in the chromosome. It is found in the centromere. Its subcellular location is the kinetochore. The protein localises to the cytoplasm. It localises to the cytoskeleton. The protein resides in the microtubule organizing center. It is found in the centrosome. Its subcellular location is the spindle pole. In terms of biological role, may regulate the LIS1/dynein pathway by stabilizing LIS1 with Hsp90 chaperone. The protein is NudC domain-containing protein 2 (NUDCD2) of Homo sapiens (Human).